We begin with the raw amino-acid sequence, 267 residues long: Neuferricin (267 aa).

The N-terminal stretch at 1–17 is a signal peptide; the sequence is MLKYLVALISMVLAVWT. Positions 53–150 constitute a Cytochrome b5 heme-binding domain; that stretch reads LLTKEQLSLY…RDYTPVGKLI (98 aa).

The protein belongs to the cytochrome b5 family. MAPR subfamily.

The protein resides in the secreted. Functionally, heme-binding protein which promotes neuronal but not astrocyte differentiation. The chain is Neuferricin (cyb5d2) from Danio rerio (Zebrafish).